The following is a 250-amino-acid chain: DNA repair protein RecO (250 aa).

The protein belongs to the RecO family.

Its function is as follows. Involved in DNA repair and RecF pathway recombination. The protein is DNA repair protein RecO of Beijerinckia indica subsp. indica (strain ATCC 9039 / DSM 1715 / NCIMB 8712).